Reading from the N-terminus, the 304-residue chain is Small ribosomal subunit biogenesis GTPase RsgA (304 aa).

The region spanning 70 to 229 (HNELNRPNIA…IADTPGFSKL (160 aa)) is the CP-type G domain. GTP contacts are provided by residues 119–122 (TKID) and 172–180 (GQTGVGKST). C253, C259, H261, and C267 together coordinate Zn(2+).

Belongs to the TRAFAC class YlqF/YawG GTPase family. RsgA subfamily. Monomer. Associates with 30S ribosomal subunit, binds 16S rRNA. Zn(2+) is required as a cofactor.

It localises to the cytoplasm. In terms of biological role, one of several proteins that assist in the late maturation steps of the functional core of the 30S ribosomal subunit. Helps release RbfA from mature subunits. May play a role in the assembly of ribosomal proteins into the subunit. Circularly permuted GTPase that catalyzes slow GTP hydrolysis, GTPase activity is stimulated by the 30S ribosomal subunit. In Phytoplasma mali (strain AT), this protein is Small ribosomal subunit biogenesis GTPase RsgA.